The following is a 179-amino-acid chain: Large ribosomal subunit protein bL9 (179 aa).

The protein belongs to the bacterial ribosomal protein bL9 family.

In terms of biological role, binds to the 23S rRNA. The sequence is that of Large ribosomal subunit protein bL9 from Bartonella bacilliformis (strain ATCC 35685 / KC583 / Herrer 020/F12,63).